The sequence spans 227 residues: Urease accessory protein UreF (227 aa).

This sequence belongs to the UreF family. In terms of assembly, ureD, UreF and UreG form a complex that acts as a GTP-hydrolysis-dependent molecular chaperone, activating the urease apoprotein by helping to assemble the nickel containing metallocenter of UreC. The UreE protein probably delivers the nickel.

Its subcellular location is the cytoplasm. Required for maturation of urease via the functional incorporation of the urease nickel metallocenter. The sequence is that of Urease accessory protein UreF from Methylobacillus flagellatus (strain ATCC 51484 / DSM 6875 / VKM B-1610 / KT).